Reading from the N-terminus, the 364-residue chain is Serine/threonine-protein kinase ENV7 (364 aa).

Residues cysteine 13, cysteine 14, and cysteine 15 are each lipidated (S-palmitoyl cysteine). The Protein kinase domain maps to 30-364 (YRIQRLLGEG…LLNLLQDLDT (335 aa)). Residues 36–44 (LGEGGMSFV) and lysine 69 contribute to the ATP site. Catalysis depends on aspartate 215, which acts as the Proton acceptor.

This sequence belongs to the protein kinase superfamily. Ser/Thr protein kinase family.

It is found in the vacuole membrane. The catalysed reaction is L-seryl-[protein] + ATP = O-phospho-L-seryl-[protein] + ADP + H(+). The enzyme catalyses L-threonyl-[protein] + ATP = O-phospho-L-threonyl-[protein] + ADP + H(+). In terms of biological role, serine/threonine-protein kinase involved in vacuolar processing and morphology. The sequence is that of Serine/threonine-protein kinase ENV7 (ENV7) from Saccharomyces cerevisiae (strain ATCC 204508 / S288c) (Baker's yeast).